Here is a 654-residue protein sequence, read N- to C-terminus: Protein THALLO (654 aa).

Basic residues predominate over residues M1–K16. Disordered stretches follow at residues M1–E23, K35–E145, and S164–H212. Residues G2–K9 carry the Nuclear localization signal 1 motif. Composition is skewed to acidic residues over residues V44–V56, G64–E82, and G103–K114. Residues L140–E160 adopt a coiled-coil conformation. A compositionally biased stretch (acidic residues) spans G171–D181. The span at R182–H212 shows a compositional bias: basic and acidic residues. Residues L243–K263 adopt a coiled-coil conformation. Disordered stretches follow at residues S362–D397, V470–G492, and K509–M654. Basic and acidic residues predominate over residues S364–K387. Over residues S524–D546 the composition is skewed to acidic residues. Residues V552–A561 are compositionally biased toward basic residues. A compositionally biased stretch (polar residues) spans S588 to R599. Positions P608 to N615 match the Nuclear localization signal 2 motif. The segment covering N645–M654 has biased composition (polar residues).

The protein belongs to the SAS10 family. Interacts with NUCL1, NUCL2, JMJ14, NOF1 and MPP10 in the nucleus. As to expression, mainly present in tissues undergoing rapid cellular growth and differentiation. Mostly expressed in shoots and flowers, and, to a lower extent, in leaves, siliques, roots and seedlings.

It is found in the nucleus. The protein localises to the nucleolus. Functionally, essential protein during embryogenesis. Involved both in gene transcription regulation and in processing events critical for proper rRNA biogenesis and nucleolar organization during reproduction; contributes to pre-rRNA processing at the 5' external transcribed spacer. Binds RNA. This is Protein THALLO from Arabidopsis thaliana (Mouse-ear cress).